The sequence spans 637 residues: MVDYIVEYDYDAVHDDELTIRVGEIIRNVKKLQEEGWLEGELNGRRGMFPDNFVKEIKRETEPKDDNLPIKRERQGNVASLVQRISTYGLPAGGIQPHPQTKAIKKKTKKRQCKVLFDYSPQNEDELELIVGDVIDVIEEVEEGWWSGTLNNKLGLFPSNFVKELESTEDGETHNAQEESEVPLTGPTSPLPSPGNGSEPAPGSVAQPKKIRGIGFGDIFKEGSVKLRTRTSSSETEEKKTEKPLILQPLGSRTQNVEVTKPDVDGKIKAKEYCRTLFPYTGTNEDELTFREGEIIHLISKETGEAGWWKGELNGKEGVFPDNFAVQISELDKDFPKPKKPPPPAKGPAPKPDLSAAEKKAFPLKAEEKDEKSLLEQKPSKPAAPQVPPKKPTAPTKASNLLRSPGAVYPKRPEKPVPPPPPAAKINGEVSIISSKIDTEPVSKPKLDPEQLPVRPKSVDLDAFVARNSKETDDVNFDDIASSENLLHLTANRPKMPGRRLPGRFNGGHSPTQSPEKTLKLPKEDDSGNLKPLEFKKDASYSSKSSLSTPSSASKVNTAAFLTPLELKAKAEADDGKRNSVDELRAQIIELLCIVDALKKDHGKELEKLRKELEEEKAMRSNLEVEIAKLKKAVLLS.

One can recognise an SH3 1; truncated domain in the interval 1-59; that stretch reads MVDYIVEYDYDAVHDDELTIRVGEIIRNVKKLQEEGWLEGELNGRRGMFPDNFVKEIKR. An interaction with ANLN and localization to the midbody region spans residues 1-175; the sequence is MVDYIVEYDY…ESTEDGETHN (175 aa). K58 is covalently cross-linked (Glycyl lysine isopeptide (Lys-Gly) (interchain with G-Cter in SUMO2)). 2 positions are modified to phosphoserine: S80 and S86. Positions 108 to 167 constitute an SH3 2 domain; the sequence is TKKRQCKVLFDYSPQNEDELELIVGDVIDVIEEVEEGWWSGTLNNKLGLFPSNFVKELES. Basic and acidic residues predominate over residues 166 to 177; it reads ESTEDGETHNAQ. The segment at 166–209 is disordered; sequence ESTEDGETHNAQEESEVPLTGPTSPLPSPGNGSEPAPGSVAQPK. S224 is modified (phosphoserine). A disordered region spans residues 226 to 254; the sequence is KLRTRTSSSETEEKKTEKPLILQPLGSRT. An SH3 3 domain is found at 269–330; that stretch reads KAKEYCRTLF…PDNFAVQISE (62 aa). Residues 333-455 form a disordered region; the sequence is KDFPKPKKPP…KLDPEQLPVR (123 aa). 3 short sequence motifs (SH3-binding) span residues 336 to 352, 378 to 397, and 410 to 422; these read PKPK…APKP, KPSK…APTK, and PKRP…PPPP. Positions 341-351 are enriched in pro residues; the sequence is PPPPAKGPAPK. The segment covering 356 to 379 has biased composition (basic and acidic residues); that stretch reads AAEKKAFPLKAEEKDEKSLLEQKP. Basic and acidic residues predominate over residues 437–449; that stretch reads IDTEPVSKPKLDP. Phosphoserine is present on residues S458, S469, S510, and S514. The segment at 488–555 is disordered; the sequence is HLTANRPKMP…SLSTPSSASK (68 aa). Over residues 517–539 the composition is skewed to basic and acidic residues; that stretch reads KTLKLPKEDDSGNLKPLEFKKDA. A Glycyl lysine isopeptide (Lys-Gly) (interchain with G-Cter in SUMO2) cross-link involves residue K523. Positions 540 to 555 are enriched in low complexity; sequence SYSSKSSLSTPSSASK. T563 bears the Phosphothreonine mark. Residues 578–636 are a coiled coil; the sequence is RNSVDELRAQIIELLCIVDALKKDHGKELEKLRKELEEEKAMRSNLEVEIAKLKKAVLL. S580 is subject to Phosphoserine.

In terms of assembly, homodimer. Interacts with F-actin, PKD2, NPHS1 and NPHS2. Interacts with WTIP. Interacts with DDN; interaction is direct. Interacts (via SH3 2 domain) with CBL (via phosphorylated C-terminus). Interacts with BCAR1/p130Cas (via SH3 domain). Interacts with MVB12A and ARHGAP17. Interacts with ANLN, CD2 and CBLB. Interacts with PDCD6IP and TSG101. Interacts with RIN3. Interacts directly with RET (inactive) and CBLC; upon RET activation by GDNF suggested to dissociate from RET as CBLC:CD2AP complex. Interacts with CGNL1 and SH3BP1; probably part of a complex at cell junctions. Interacts with CAPZA1. Post-translationally, phosphorylated on tyrosine residues; probably by c-Abl, Fyn and c-Src. In terms of tissue distribution, expressed in podocytes (at protein level).

It is found in the cytoplasm. Its subcellular location is the cytoskeleton. The protein localises to the cell projection. It localises to the ruffle. The protein resides in the cell junction. Functionally, seems to act as an adapter protein between membrane proteins and the actin cytoskeleton. In collaboration with CBLC, modulates the rate of RET turnover and may act as regulatory checkpoint that limits the potency of GDNF on neuronal survival. Controls CBLC function, converting it from an inhibitor to a promoter of RET degradation. May play a role in receptor clustering and cytoskeletal polarity in the junction between T-cell and antigen-presenting cell. May anchor the podocyte slit diaphragm to the actin cytoskeleton in renal glomerolus. Also required for cytokinesis. Plays a role in epithelial cell junctions formation. This is CD2-associated protein (Cd2ap) from Mus musculus (Mouse).